The chain runs to 304 residues: Quinolinate synthase (304 aa).

Iminosuccinate is bound by residues His24 and Ser41. A [4Fe-4S] cluster-binding site is contributed by Cys86. Residues 112 to 114 and Ser129 each bind iminosuccinate; that span reads YVN. Cys171 contributes to the [4Fe-4S] cluster binding site. Iminosuccinate is bound by residues 197-199 and Thr214; that span reads HPE. [4Fe-4S] cluster is bound at residue Cys259.

The protein belongs to the quinolinate synthase family. Type 2 subfamily. [4Fe-4S] cluster serves as cofactor.

Its subcellular location is the cytoplasm. The catalysed reaction is iminosuccinate + dihydroxyacetone phosphate = quinolinate + phosphate + 2 H2O + H(+). It functions in the pathway cofactor biosynthesis; NAD(+) biosynthesis; quinolinate from iminoaspartate: step 1/1. Functionally, catalyzes the condensation of iminoaspartate with dihydroxyacetone phosphate to form quinolinate. The protein is Quinolinate synthase of Geotalea uraniireducens (strain Rf4) (Geobacter uraniireducens).